A 139-amino-acid chain; its full sequence is Gas vesicle protein A (139 aa).

The segment at 113 to 139 (EKLGDMLTSDEPEPRKATRVRSRRADR) is disordered. Residues 129–139 (ATRVRSRRADR) are compositionally biased toward basic residues.

This sequence belongs to the gas vesicle GvpA family. The gas vesicle shell is 2 nm thick and consists of a single layer of this protein. It forms helical ribs nearly perpendicular to the long axis of the vesicle.

It localises to the gas vesicle shell. Functionally, gas vesicles are hollow, gas filled proteinaceous nanostructures found in some microorganisms. During planktonic growth they allow positioning of the organism at a favorable depth for light or nutrient acquisition. GvpA forms the protein shell. This is Gas vesicle protein A from Mycobacterium sp. (strain JLS).